Consider the following 425-residue polypeptide: CinA-like protein (425 aa).

The protein belongs to the CinA family.

The protein is CinA-like protein of Shewanella sp. (strain MR-4).